Here is a 473-residue protein sequence, read N- to C-terminus: Photosystem II CP43 reaction center protein (473 aa).

The propeptide occupies 1-14 (MKTLYSLRRFSHVE). Thr15 carries the post-translational modification N-acetylthreonine. The residue at position 15 (Thr15) is a Phosphothreonine. The next 5 membrane-spanning stretches (helical) occupy residues 69–93 (LFEV…PHLA), 134–155 (LLGP…KDRN), 178–200 (KALY…RKIT), 255–275 (KPFA…LSYS), and 291–312 (WFNN…ASQA). Residue Glu367 coordinates [CaMn4O5] cluster. Residues 447–471 (RARAAAAGFEKGIDRDFEPVLSMTP) traverse the membrane as a helical segment.

Belongs to the PsbB/PsbC family. PsbC subfamily. In terms of assembly, PSII is composed of 1 copy each of membrane proteins PsbA, PsbB, PsbC, PsbD, PsbE, PsbF, PsbH, PsbI, PsbJ, PsbK, PsbL, PsbM, PsbT, PsbX, PsbY, PsbZ, Psb30/Ycf12, at least 3 peripheral proteins of the oxygen-evolving complex and a large number of cofactors. It forms dimeric complexes. It depends on Binds multiple chlorophylls and provides some of the ligands for the Ca-4Mn-5O cluster of the oxygen-evolving complex. It may also provide a ligand for a Cl- that is required for oxygen evolution. PSII binds additional chlorophylls, carotenoids and specific lipids. as a cofactor.

Its subcellular location is the plastid membrane. Functionally, one of the components of the core complex of photosystem II (PSII). It binds chlorophyll and helps catalyze the primary light-induced photochemical processes of PSII. PSII is a light-driven water:plastoquinone oxidoreductase, using light energy to abstract electrons from H(2)O, generating O(2) and a proton gradient subsequently used for ATP formation. This chain is Photosystem II CP43 reaction center protein, found in Cuscuta gronovii (Common dodder).